The following is a 322-amino-acid chain: MGSNQLLRPRKVPKLFVFGDSYADTGNTKRDTEAWAIPYGITFPGKPSGRYCDGLIATDFLEKVLGAESPYLYRTHGRDKGLKRGMNFAFGGSKMLDSSPNSPFPNITAQVNFLVDLVLAGRVYGDITPSDVSLISYAGGDYIYYIDQNRPAAGLKALVEKVVDNLRVNMIVLGGLLFKKIAVTSLQPIGCLPSYTSASSFKSCNESQSALVELHNKLLKKVVAKLNEQSRVMKKEQHFFIIDIHNAFMTVMKNKGSKRFKNPMKSCCEGYCGRSSDGGKLYTLCDDPKSFFFWDAVHPTQEGWRSIYSVLGNPLTDFLTKP.

The Nucleophile role is filled by Ser21. Catalysis depends on residues Asp295 and His298.

The protein belongs to the 'GDSL' lipolytic enzyme family.

In Arabidopsis thaliana (Mouse-ear cress), this protein is GDSL esterase/lipase At5g03600.